Reading from the N-terminus, the 272-residue chain is Small ribosomal subunit protein mS23 (272 aa).

A disordered region spans residues 233–272; that stretch reads KENASKAAGDASAVSSEKQVEDDVVNFDESTDADQEVLHF. Over residues 252 to 272 the composition is skewed to acidic residues; it reads VEDDVVNFDESTDADQEVLHF.

It belongs to the mitochondrion-specific ribosomal protein mS23 family. As to quaternary structure, component of the mitochondrial small ribosomal subunit.

Its subcellular location is the mitochondrion. The polypeptide is Small ribosomal subunit protein mS23 (RSM25) (Candida glabrata (strain ATCC 2001 / BCRC 20586 / JCM 3761 / NBRC 0622 / NRRL Y-65 / CBS 138) (Yeast)).